The sequence spans 232 residues: Cytidylate kinase (232 aa).

11–19 contacts ATP; that stretch reads GPAGAGKST.

Belongs to the cytidylate kinase family. Type 1 subfamily.

Its subcellular location is the cytoplasm. It catalyses the reaction CMP + ATP = CDP + ADP. The catalysed reaction is dCMP + ATP = dCDP + ADP. The sequence is that of Cytidylate kinase from Desulfitobacterium hafniense (strain Y51).